The chain runs to 34 residues: Cytochrome c oxidase polypeptide 2A (34 aa).

Met-1 is subject to N-formylmethionine. Residues 4–34 (KPKGALAVILVLTLTILVFWLGVYAVFFARG) form a helical membrane-spanning segment.

It is found in the cell membrane. The catalysed reaction is 4 Fe(II)-[cytochrome c] + O2 + 8 H(+)(in) = 4 Fe(III)-[cytochrome c] + 2 H2O + 4 H(+)(out). The sequence is that of Cytochrome c oxidase polypeptide 2A (cbaD) from Thermus thermophilus (strain ATCC 27634 / DSM 579 / HB8).